A 62-amino-acid polypeptide reads, in one-letter code: Large ribosomal subunit protein uL29 (62 aa).

It belongs to the universal ribosomal protein uL29 family.

The polypeptide is Large ribosomal subunit protein uL29 (Helicobacter hepaticus (strain ATCC 51449 / 3B1)).